The sequence spans 116 residues: MKFLIAFAVLALVACINANPYGSNRGYEGGRVAYVQEVGYGGGSYGNQGYGNHGYGNRGYAQPLYSRSSNPSASAAAAAASAGIRPGRYEQAAVIGYDLDASYNGHSRGGYGRGGY.

An N-terminal signal peptide occupies residues 1–18; it reads MKFLIAFAVLALVACINA.

It belongs to the chorion protein S15/S18 family.

Its subcellular location is the secreted. In terms of biological role, chorion membrane (egg shell) protein; plays a role in protecting the egg from the environment. The chain is Chorion protein S15 (Cp15) from Drosophila virilis (Fruit fly).